A 151-amino-acid chain; its full sequence is MKTAVVLAAFSALMALARAQSPLASMGGGGSPMGMGMGMGMNRMMLPMLMGGMDMKHFALMNMLGGGGGMGGSRMLPLMAALRGNENMLPILLAAKGGMSNPLAMMAMLGGNDNLMNMLPLMMSSGMGMGGGGGMMRGAGAAGGGAAGPGM.

The signal sequence occupies residues 1–19 (MKTAVVLAAFSALMALARA).

As to expression, component of the acid-insoluble and acid-soluble organic matrix of calcified layers of the shell (at protein level).

It localises to the secreted. In Lottia gigantea (Giant owl limpet), this protein is Glycine and methionine-rich protein.